The chain runs to 344 residues: Arginine N-succinyltransferase (344 aa).

Leu-125 lines the succinyl-CoA pocket. His-229 (proton donor) is an active-site residue.

This sequence belongs to the arginine N-succinyltransferase family.

It catalyses the reaction succinyl-CoA + L-arginine = N(2)-succinyl-L-arginine + CoA + H(+). It functions in the pathway amino-acid degradation; L-arginine degradation via AST pathway; L-glutamate and succinate from L-arginine: step 1/5. Catalyzes the transfer of succinyl-CoA to arginine to produce N(2)-succinylarginine. This Shigella dysenteriae serotype 1 (strain Sd197) protein is Arginine N-succinyltransferase.